A 404-amino-acid chain; its full sequence is Cysteine desulfurase IscS (404 aa).

Pyridoxal 5'-phosphate contacts are provided by residues 75–76 (AT), asparagine 155, glutamine 183, and 203–205 (SAH). Residue lysine 206 is modified to N6-(pyridoxal phosphate)lysine. Position 243 (threonine 243) interacts with pyridoxal 5'-phosphate. Cysteine 328 serves as the catalytic Cysteine persulfide intermediate. Cysteine 328 is a binding site for [2Fe-2S] cluster.

The protein belongs to the class-V pyridoxal-phosphate-dependent aminotransferase family. NifS/IscS subfamily. Homodimer. Forms a heterotetramer with IscU, interacts with other sulfur acceptors. Requires pyridoxal 5'-phosphate as cofactor.

It is found in the cytoplasm. The enzyme catalyses (sulfur carrier)-H + L-cysteine = (sulfur carrier)-SH + L-alanine. The protein operates within cofactor biosynthesis; iron-sulfur cluster biosynthesis. Master enzyme that delivers sulfur to a number of partners involved in Fe-S cluster assembly, tRNA modification or cofactor biosynthesis. Catalyzes the removal of elemental sulfur atoms from cysteine to produce alanine. Functions as a sulfur delivery protein for Fe-S cluster synthesis onto IscU, an Fe-S scaffold assembly protein, as well as other S acceptor proteins. The polypeptide is Cysteine desulfurase IscS (Pseudomonas putida (strain GB-1)).